The chain runs to 219 residues: MPPRPRFDRRAPVRELPNINDRINYPKLRVVDADGTQLGVINREEALDVAKDRELDLVLVSEKADPPVCRIMDYGKFKFEQEKKAKEAKKKSHQTEVKEVKMRYKIDQHDYNVRIGQAVRFLKAGDKVKCTVIFRGREIQHTALAETLLRRMAKDLEEQAEIQQAPKREGRNMIMFLTPRKTPLIKTDKENQIPTRAVRTITAPPRATTAAKTQLNKDQ.

It belongs to the IF-3 family. In terms of assembly, monomer.

Its subcellular location is the cytoplasm. In terms of biological role, IF-3 binds to the 30S ribosomal subunit and shifts the equilibrium between 70S ribosomes and their 50S and 30S subunits in favor of the free subunits, thus enhancing the availability of 30S subunits on which protein synthesis initiation begins. This is Translation initiation factor IF-3 from Prochlorococcus marinus (strain MIT 9303).